Reading from the N-terminus, the 149-residue chain is Large ribosomal subunit protein bL9 (149 aa).

This sequence belongs to the bacterial ribosomal protein bL9 family.

Its function is as follows. Binds to the 23S rRNA. The chain is Large ribosomal subunit protein bL9 from Actinobacillus succinogenes (strain ATCC 55618 / DSM 22257 / CCUG 43843 / 130Z).